Reading from the N-terminus, the 484-residue chain is tRNA sulfurtransferase (484 aa).

The 105-residue stretch at glycine 62–arginine 166 folds into the THUMP domain. ATP-binding positions include leucine 184–isoleucine 185, lysine 266, glycine 288, and glutamine 297. An intrachain disulfide couples cysteine 345 to cysteine 456. One can recognise a Rhodanese domain in the interval proline 404–proline 482. Cysteine 456 acts as the Cysteine persulfide intermediate in catalysis.

The protein belongs to the ThiI family.

It localises to the cytoplasm. It catalyses the reaction [ThiI sulfur-carrier protein]-S-sulfanyl-L-cysteine + a uridine in tRNA + 2 reduced [2Fe-2S]-[ferredoxin] + ATP + H(+) = [ThiI sulfur-carrier protein]-L-cysteine + a 4-thiouridine in tRNA + 2 oxidized [2Fe-2S]-[ferredoxin] + AMP + diphosphate. The enzyme catalyses [ThiS sulfur-carrier protein]-C-terminal Gly-Gly-AMP + S-sulfanyl-L-cysteinyl-[cysteine desulfurase] + AH2 = [ThiS sulfur-carrier protein]-C-terminal-Gly-aminoethanethioate + L-cysteinyl-[cysteine desulfurase] + A + AMP + 2 H(+). Its pathway is cofactor biosynthesis; thiamine diphosphate biosynthesis. Functionally, catalyzes the ATP-dependent transfer of a sulfur to tRNA to produce 4-thiouridine in position 8 of tRNAs, which functions as a near-UV photosensor. Also catalyzes the transfer of sulfur to the sulfur carrier protein ThiS, forming ThiS-thiocarboxylate. This is a step in the synthesis of thiazole, in the thiamine biosynthesis pathway. The sulfur is donated as persulfide by IscS. The protein is tRNA sulfurtransferase of Marinobacter nauticus (strain ATCC 700491 / DSM 11845 / VT8) (Marinobacter aquaeolei).